Here is a 103-residue protein sequence, read N- to C-terminus: UPF0473 protein LBA0420 (103 aa).

Belongs to the UPF0473 family.

In Lactobacillus acidophilus (strain ATCC 700396 / NCK56 / N2 / NCFM), this protein is UPF0473 protein LBA0420.